Here is a 947-residue protein sequence, read N- to C-terminus: Protein RRC1-like (947 aa).

Residues 1–11 (MVKDEFFLDHP) show a composition bias toward basic and acidic residues. Disordered stretches follow at residues 1–35 (MVKD…RMKQ) and 63–167 (PNDN…DELP). The span at 12-34 (GRKHRSRNTEKKKKPRRRERRMK) shows a compositional bias: basic residues. Basic and acidic residues-rich tracts occupy residues 66–84 (NKLK…DSIS) and 104–155 (KGPE…DHNS). An RRM domain is found at 187 to 268 (TNLYVVNLSS…YELKIGWGKV (82 aa)). The SURP motif repeat unit spans residues 336–379 (IIDTMALNVLDGGCAFEQAIMERGRGNPLFNFLFELGSKEHTYY). The disordered stretch occupies residues 412–434 (PPLPATRSPEHGKESRGTYAAGK). Residues 444-589 (LTDSQRDEFE…GLRATFLRSR (146 aa)) form the CID domain. The SAP domain maps to 638 to 672 (LMNRPISELERRCRHNGLSLLGGREMMVARLVCLK). Disordered regions lie at residues 752 to 797 (REDD…PENE) and 846 to 947 (GLSG…RGMR). Composition is skewed to basic and acidic residues over residues 854–876 (LPEK…RSES), 888–916 (LTRE…LDKD), and 924–947 (SSRE…RGMR).

As to expression, expressed in leaves, inflorescence stems, roots, flower buds, open flowers and siliques.

Functionally, probable SR-like splicing factor. The sequence is that of Protein RRC1-like from Arabidopsis thaliana (Mouse-ear cress).